The following is a 742-amino-acid chain: Two pore calcium channel protein 1 (742 aa).

A disordered region spans residues 1–44 (MSEAQAPLITEEAAERGLASSGSRRLSDGGGGQGSRKYRRRSDA). The Cytoplasmic segment spans residues 1 to 82 (MSEAQAPLIT…NDTRFGRAMS (82 aa)). A helical transmembrane segment spans residues 83–103 (FYFVYLRLDWLWSLNIFALIL). Residues 104 to 140 (LNFLEKPLWCRKDALHACDQRDMYFLGQLPYFSKTES) lie on the Extracellular side of the membrane. The helical transmembrane segment at 141–161 (LIYEGLTLVILVMEILCPLSY) threads the bilayer. Topologically, residues 162-176 (EGLNIFWRSTTNKLK) are cytoplasmic. The helical transmembrane segment at 177 to 197 (ILLLFILACDILVFAFSSQPF) threads the bilayer. At 198-204 (RLAPYIR) the chain is on the extracellular side. Residues 205–226 (VVFLIMTIRELRMCAITLAGLI) traverse the membrane as a helical; Voltage-sensor segment. Residues 227–247 (GTYLNVLALSLLFLLFASWLA) form a helical membrane-spanning segment. The Extracellular portion of the chain corresponds to 248–258 (YVTFEDTPQGK). The pore-forming intramembrane region spans 259–273 (TIFSSYGVTLYQMFV). At 274–296 (LFTTSNNPDVWVPAYKISRWYSL) the chain is on the extracellular side. The helical transmembrane segment at 297 to 317 (FFIVYVLLGVYFLTNLILAVI) threads the bilayer. Over 318 to 446 (YDSFKEQFAK…SFVRSRTFEY (129 aa)) the chain is Cytoplasmic. EF-hand domains follow at residues 335-370 (IRKN…LNKY) and 376-411 (TSRE…IAIK). The helical transmembrane segment at 447–467 (IIVFVLLINLVAVIIETTLDI) threads the bilayer. Over 468 to 480 (ENSSSQETWQEVE) the chain is Extracellular. N469 carries N-linked (GlcNAc...) asparagine glycosylation. The helical transmembrane segment at 481–501 (FFLGWIYVAEMALKIFSLGFG) threads the bilayer. Residues 502 to 510 (AYWMEGQNK) lie on the Cytoplasmic side of the membrane. The chain crosses the membrane as a helical span at residues 511-531 (FDFVLTWTIFIGETLTFAFPS). Topologically, residues 532 to 540 (KLPFLSNGE) are extracellular. A helical; Voltage-sensor transmembrane segment spans residues 541–558 (WIRYLLLGRVLRLTRILL). Residues 559 to 582 (QVQRFRVFVATFFTLMSSLMPYLG) are Cytoplasmic-facing. The helical transmembrane segment at 583 to 603 (IVFCILCMYCSLGLQIFGGIV) threads the bilayer. Residues 604–627 (YAGNPTLEETDLFSNDYLLFNFND) lie on the Extracellular side of the membrane. Positions 628-642 (YPSGMVTLFNLLVMG) form an intramembrane region, pore-forming. The Extracellular segment spans residues 643 to 663 (NWQVWMESYWQLTGSSWSLIY). A helical membrane pass occupies residues 664-684 (FVSFYLISILLLLNLIVAFVL). The Cytoplasmic portion of the chain corresponds to 685–742 (EAFFAEMELEKGEEVDIQSPTSGGIKKRRSMRVRSKGTMVDILLHHMLSNELDGSQNS).

The protein belongs to the calcium channel alpha-1 subunit (TC 1.A.1.11) family. Two pore calcium channel subfamily. As to quaternary structure, homodimer.

The protein resides in the membrane. Inhibited by Al(3+). In terms of biological role, functions as a voltage-gated inward-rectifying Ca(2+) channel (VDCC) across the plasma membrane that mediates sucrose-induced Ca(2+) influx in autotrophically grown leaf cells. Acts as the major ROS-responsive Ca(2+) channel and is the possible target of Al-dependent inhibition. Plays a regulatory role in defense responses. The chain is Two pore calcium channel protein 1 (TPC1) from Hordeum vulgare (Barley).